Here is a 286-residue protein sequence, read N- to C-terminus: Shikimate dehydrogenase (NADP(+)) (286 aa).

Shikimate contacts are provided by residues 19–21 (SVS) and Thr66. The active-site Proton acceptor is Lys70. The shikimate site is built by Asn91 and Asp106. Residues 130–134 (GAGGS) and Ala225 each bind NADP(+). Tyr227 provides a ligand contact to shikimate. Gly248 serves as a coordination point for NADP(+).

The protein belongs to the shikimate dehydrogenase family. In terms of assembly, homodimer.

It catalyses the reaction shikimate + NADP(+) = 3-dehydroshikimate + NADPH + H(+). Its pathway is metabolic intermediate biosynthesis; chorismate biosynthesis; chorismate from D-erythrose 4-phosphate and phosphoenolpyruvate: step 4/7. Functionally, involved in the biosynthesis of the chorismate, which leads to the biosynthesis of aromatic amino acids. Catalyzes the reversible NADPH linked reduction of 3-dehydroshikimate (DHSA) to yield shikimate (SA). The sequence is that of Shikimate dehydrogenase (NADP(+)) from Dehalococcoides mccartyi (strain ATCC BAA-2100 / JCM 16839 / KCTC 5957 / BAV1).